A 209-amino-acid polypeptide reads, in one-letter code: Large ribosomal subunit protein uL4 (209 aa).

The tract at residues 44–77 (QRQGTHKSKERSEVSGSTRKLIRQKGGGGARRGD) is disordered.

Belongs to the universal ribosomal protein uL4 family. As to quaternary structure, part of the 50S ribosomal subunit.

In terms of biological role, one of the primary rRNA binding proteins, this protein initially binds near the 5'-end of the 23S rRNA. It is important during the early stages of 50S assembly. It makes multiple contacts with different domains of the 23S rRNA in the assembled 50S subunit and ribosome. Its function is as follows. Forms part of the polypeptide exit tunnel. This is Large ribosomal subunit protein uL4 from Parabacteroides distasonis (strain ATCC 8503 / DSM 20701 / CIP 104284 / JCM 5825 / NCTC 11152).